We begin with the raw amino-acid sequence, 671 residues long: cGMP-dependent protein kinase 1 (671 aa).

At Ser-2 the chain carries N-acetylserine. Positions Ser-2 to Thr-59 form a coiled coil. Residues Ser-2 to Asp-102 are required for dimerization. Residues Ala-9 to Gln-44 form a leucine-zipper region. An autoinhibitory domain region spans residues Pro-50 to His-75. Thr-59 carries the post-translational modification Phosphothreonine; by autocatalysis. Residues Phe-103–Pro-220 are cGMP-binding, high affinity. 3',5'-cyclic AMP-binding positions include Gly-167–Ala-170 and Arg-177–Thr-178. 3',5'-cyclic GMP contacts are provided by residues Gly-167–Ala-170, Arg-177–Thr-178, Arg-282, Gly-291–Ala-294, Arg-301–Thr-302, and Tyr-336. The tract at residues Thr-221–Ala-341 is cGMP-binding, low affinity. Residues Gly-291–Ala-294, Arg-301–Thr-302, and Tyr-336 contribute to the 3',5'-cyclic AMP site. The 260-residue stretch at Phe-360 to Phe-619 folds into the Protein kinase domain. ATP contacts are provided by residues Leu-366–Val-374 and Lys-390. Catalysis depends on Asp-484, which acts as the Proton acceptor. Position 515 is a phosphothreonine (Thr-515). The 52-residue stretch at Glu-620 to Phe-671 folds into the AGC-kinase C-terminal domain. Positions Pro-635–Phe-671 are disordered. The span at Phe-652–Pro-661 shows a compositional bias: acidic residues.

It belongs to the protein kinase superfamily. AGC Ser/Thr protein kinase family. cGMP subfamily. In terms of assembly, isoform alpha: parallel homodimer or heterodimer and also heterotetramer. Interacts directly with PPP1R12A. Non-covalent dimer of dimer of PRKG1-PRKG1 and PPP1R12A-PPP1R12A. This interaction targets PRKG1 to stress fibers to mediate smooth muscle cell relaxation and vasodilation in responses to rises in cGMP. Isoform beta: antiparallel homodimer. Part of cGMP kinase signaling complex at least composed of ACTA2/alpha-actin, CNN1/calponin H1, PLN/phospholamban, PRKG1 and ITPR1. Interacts with IRAG1. Forms a stable complex with ITPR1, IRAG1, and isoform beta of PRKG1. Interacts with TRPC7 (via ankyrin repeat domain). Isoform alpha interacts with RGS2. Interacts with GTF2I. Post-translationally, autophosphorylation increases kinase activity. In terms of processing, 65 kDa monomer is produced by proteolytic cleavage. Primarily expressed in lung and placenta.

It is found in the cytoplasm. It catalyses the reaction L-seryl-[protein] + ATP = O-phospho-L-seryl-[protein] + ADP + H(+). The enzyme catalyses L-threonyl-[protein] + ATP = O-phospho-L-threonyl-[protein] + ADP + H(+). With respect to regulation, in the absence of cGMP, PRKG1 activity is suppressed by autoinhibitory contacts. Functionally, serine/threonine protein kinase that acts as a key mediator of the nitric oxide (NO)/cGMP signaling pathway. GMP binding activates PRKG1, which phosphorylates serines and threonines on many cellular proteins. Numerous protein targets for PRKG1 phosphorylation are implicated in modulating cellular calcium, but the contribution of each of these targets may vary substantially among cell types. Proteins that are phosphorylated by PRKG1 regulate platelet activation and adhesion, smooth muscle contraction, cardiac function, gene expression, feedback of the NO-signaling pathway, and other processes involved in several aspects of the CNS like axon guidance, hippocampal and cerebellar learning, circadian rhythm and nociception. Smooth muscle relaxation is mediated through lowering of intracellular free calcium, by desensitization of contractile proteins to calcium, and by decrease in the contractile state of smooth muscle or in platelet activation. Regulates intracellular calcium levels via several pathways: phosphorylates IRAG1 and inhibits IP3-induced Ca(2+) release from intracellular stores, phosphorylation of KCNMA1 (BKCa) channels decreases intracellular Ca(2+) levels, which leads to increased opening of this channel. PRKG1 phosphorylates the canonical transient receptor potential channel (TRPC) family which inactivates the associated inward calcium current. Another mode of action of NO/cGMP/PKGI signaling involves PKGI-mediated inactivation of the Ras homolog gene family member A (RhoA). Phosphorylation of RHOA by PRKG1 blocks the action of this protein in myriad processes: regulation of RHOA translocation; decreasing contraction; controlling vesicle trafficking, reduction of myosin light chain phosphorylation resulting in vasorelaxation. Activation of PRKG1 by NO signaling also alters gene expression in a number of tissues. In smooth muscle cells, increased cGMP and PRKG1 activity influence expression of smooth muscle-specific contractile proteins, levels of proteins in the NO/cGMP signaling pathway, down-regulation of the matrix proteins osteopontin and thrombospondin-1 to limit smooth muscle cell migration and phenotype. Regulates vasodilator-stimulated phosphoprotein (VASP) functions in platelets and smooth muscle. In Homo sapiens (Human), this protein is cGMP-dependent protein kinase 1 (PRKG1).